Here is a 443-residue protein sequence, read N- to C-terminus: tRNA modification GTPase MnmE (443 aa).

Residues Arg-23, Glu-82, and Lys-121 each contribute to the (6S)-5-formyl-5,6,7,8-tetrahydrofolate site. Positions 215 to 364 (GTSIVLAGHP…LKQFIQQWMQ (150 aa)) constitute a TrmE-type G domain. Asn-225 lines the K(+) pocket. GTP-binding positions include 225–230 (NAGKSS), 244–250 (TDIPGTT), and 269–272 (DSAG). Ser-229 lines the Mg(2+) pocket. Positions 244, 246, and 249 each coordinate K(+). Position 250 (Thr-250) interacts with Mg(2+). Residue Lys-443 coordinates (6S)-5-formyl-5,6,7,8-tetrahydrofolate.

The protein belongs to the TRAFAC class TrmE-Era-EngA-EngB-Septin-like GTPase superfamily. TrmE GTPase family. As to quaternary structure, homodimer. Heterotetramer of two MnmE and two MnmG subunits. K(+) is required as a cofactor.

Its subcellular location is the cytoplasm. Its function is as follows. Exhibits a very high intrinsic GTPase hydrolysis rate. Involved in the addition of a carboxymethylaminomethyl (cmnm) group at the wobble position (U34) of certain tRNAs, forming tRNA-cmnm(5)s(2)U34. This chain is tRNA modification GTPase MnmE, found in Chlamydia abortus (strain DSM 27085 / S26/3) (Chlamydophila abortus).